The primary structure comprises 215 residues: MPNARILKIQAAAALNNLTLDIPQPFAFGTANKSPEFLQKFPTGKVPAFESSDGEVTLVESDAIAQYVAASGPAAPALLGRNVAEQAAVRQWICFAENEVFRNMMAVVLWRVGMREYDAGVDGEGAKGLEEALAVVERHLAVGEKEFLATEGELSLVDLTLASALFWAFMHYIDEEMRGRFPRVVRWYLRVVGAERVREVFGEPSLVAVRKEASV.

The 76-residue stretch at 1-76 folds into the GST N-terminal domain; that stretch reads MPNARILKIQ…YVAASGPAAP (76 aa). Positions 82–215 constitute a GST C-terminal domain; it reads NVAEQAAVRQ…LVAVRKEASV (134 aa).

This sequence belongs to the GST superfamily.

The sequence is that of Glutathione S-transferase-like protein from Aspergillus aculeatus (strain ATCC 16872 / CBS 172.66 / WB 5094).